The primary structure comprises 295 residues: Energy-coupling factor transporter ATP-binding protein EcfA2 (295 aa).

The ABC transporter domain occupies 3-246 (ITFKQVDFTY…PAWLTAHQLG (244 aa)). 40–47 (GHTGSGKS) contributes to the ATP binding site.

It belongs to the ABC transporter superfamily. Energy-coupling factor EcfA family. Forms a stable energy-coupling factor (ECF) transporter complex composed of 2 membrane-embedded substrate-binding proteins (S component), 2 ATP-binding proteins (A component) and 2 transmembrane proteins (T component).

The protein resides in the cell membrane. In terms of biological role, ATP-binding (A) component of a common energy-coupling factor (ECF) ABC-transporter complex. Unlike classic ABC transporters this ECF transporter provides the energy necessary to transport a number of different substrates. The polypeptide is Energy-coupling factor transporter ATP-binding protein EcfA2 (Lactiplantibacillus plantarum (strain ATCC BAA-793 / NCIMB 8826 / WCFS1) (Lactobacillus plantarum)).